The following is a 215-amino-acid chain: UPF0441 protein SG0265 (215 aa).

It belongs to the UPF0441 family.

The polypeptide is UPF0441 protein SG0265 (Sodalis glossinidius (strain morsitans)).